The primary structure comprises 957 residues: Translation initiation factor IF-2 (957 aa).

Disordered regions lie at residues 34–282 (KSHS…RVVK) and 311–367 (SQSL…TIAG). Over residues 107–161 (PARPQPPQAPTRPTPPAPVAPKPVEPVAAKPPAPPAKPEPTPPRPVPTLVPPPTR) the composition is skewed to pro residues. Over residues 163-188 (TKKEEKVAATPPPRKELKEPPKKEKG) the composition is skewed to basic and acidic residues. Residues 209 to 242 (PPAPAKPPEMAPKPALPELQPPPKPVRAPNPPKP) are compositionally biased toward pro residues. Basic and acidic residues-rich tracts occupy residues 250–259 (LDDKSVSKVI) and 266–275 (KDFDEEESKR). The tr-type G domain maps to 444–617 (RRPPVVTIMG…LLVAEVEDLY (174 aa)). Residues 453–460 (GHVDHGKT) form a G1 region. GTP is bound at residue 453–460 (GHVDHGKT). The tract at residues 478–482 (GITQH) is G2. A G3 region spans residues 503 to 506 (DTPG). Residues 503–507 (DTPGH) and 557–560 (NKID) contribute to the GTP site. Residues 557-560 (NKID) are G4. Residues 593–595 (SAL) form a G5 region.

Belongs to the TRAFAC class translation factor GTPase superfamily. Classic translation factor GTPase family. IF-2 subfamily.

It is found in the cytoplasm. Functionally, one of the essential components for the initiation of protein synthesis. Protects formylmethionyl-tRNA from spontaneous hydrolysis and promotes its binding to the 30S ribosomal subunits. Also involved in the hydrolysis of GTP during the formation of the 70S ribosomal complex. The protein is Translation initiation factor IF-2 of Thermosynechococcus vestitus (strain NIES-2133 / IAM M-273 / BP-1).